The following is a 447-amino-acid chain: N-succinylarginine dihydrolase (447 aa).

Substrate is bound by residues 19-28, Asn110, and 137-138; these read AGLSFGNEAS and HR. The active site involves Glu174. Residue Arg212 participates in substrate binding. His248 is an active-site residue. The substrate site is built by Asp250 and Asn359. Cys365 acts as the Nucleophile in catalysis.

This sequence belongs to the succinylarginine dihydrolase family. In terms of assembly, homodimer.

The catalysed reaction is N(2)-succinyl-L-arginine + 2 H2O + 2 H(+) = N(2)-succinyl-L-ornithine + 2 NH4(+) + CO2. The protein operates within amino-acid degradation; L-arginine degradation via AST pathway; L-glutamate and succinate from L-arginine: step 2/5. Catalyzes the hydrolysis of N(2)-succinylarginine into N(2)-succinylornithine, ammonia and CO(2). The chain is N-succinylarginine dihydrolase from Salmonella paratyphi A (strain ATCC 9150 / SARB42).